The sequence spans 151 residues: Large ribosomal subunit protein bL9 (151 aa).

The protein belongs to the bacterial ribosomal protein bL9 family.

Binds to the 23S rRNA. This chain is Large ribosomal subunit protein bL9, found in Prochlorococcus marinus (strain AS9601).